The primary structure comprises 467 residues: Immunoglobulin superfamily member 21 (467 aa).

The first 24 residues, 1-24 (MRTAPSLRRCVCLLLAAILDLARG), serve as a signal peptide directing secretion. One can recognise an Ig-like 1 domain in the interval 25 to 132 (YLTVNIEPLP…RATREKVVLA (108 aa)). A disulfide bridge links Cys46 with Cys116. Asn82 and Asn165 each carry an N-linked (GlcNAc...) asparagine glycan. The tract at residues 229–259 (LSLLDAENRGGRPYTERPSRGLTPDPNILLQ) is disordered. Residues 234–247 (AENRGGRPYTERPS) are compositionally biased toward basic and acidic residues. Positions 344–429 (PKIVMTPSRA…GSTDTHTRLI (86 aa)) constitute an Ig-like 2 domain. 2 N-linked (GlcNAc...) asparagine glycosylation sites follow: Asn407 and Asn444.

As to quaternary structure, interacts (Ig-like 1 domain) with NRXN2 (via Laminin G-like 1 domain) in a trans-interaction manner.

Its subcellular location is the postsynaptic cell membrane. In terms of biological role, involved in synaptic inhibition in the brain. Selectively regulates inhibitory presynaptic differentiation through interacting with presynaptic NRXN2. The chain is Immunoglobulin superfamily member 21 from Homo sapiens (Human).